The chain runs to 876 residues: Radial spoke head 10 homolog B (876 aa).

Basic and acidic residues-rich tracts occupy residues 1 to 16 (MVKE…DKSA) and 57 to 66 (PKRDSEHTYQ). A disordered region spans residues 1-72 (MVKEKKKADK…HTYQSEDETQ (72 aa)). 10 MORN repeats span residues 86–108 (YEGE…GGNT), 109–131 (YHGM…DGLK), 132–154 (YEGD…DGST), 155–177 (YEGE…TQPV), 179–201 (YIGH…QEGT), 204–226 (YEGD…SGNI), 227–249 (YEGQ…TTNE), 251–273 (YTGH…LKRI), 284–306 (YIGA…SGAM), and 307–329 (YEGE…NGRV). Disordered regions lie at residues 360–386 (SQRS…LDGS) and 841–876 (EPPE…KKKK). Residues 373–386 (ADREPETLRKLDGS) are compositionally biased toward basic and acidic residues. Positions 752–841 (EKYEKSKDEQ…FELDITVLKE (90 aa)) form a coiled coil.

Interacts with RSPH6A. Does not appear to be part of the axonemal radial spoke complexes 1 or 2.

It is found in the cytoplasm. It localises to the cytoskeleton. The protein localises to the cilium axoneme. The protein resides in the cell projection. Its subcellular location is the cilium. It is found in the flagellum. May function as part of the axonemal radial spoke complex 3 (RS3). Radial spoke complexes are important for ciliary motility. This is Radial spoke head 10 homolog B (Rsph10b) from Rattus norvegicus (Rat).